The primary structure comprises 557 residues: Kelch repeat and BTB domain-containing protein 2 (557 aa).

Positions 26-95 (CDVIITIRDG…LYNRHISSMN (70 aa)) constitute a BTB domain. The BACK domain maps to 143–223 (IVKYIKRMLM…CIDIQNLDKK (81 aa)). Kelch repeat units lie at residues 305-352 (EIII…VIDD), 353-399 (TIYA…VLDQ), and 415-464 (SVHA…SHED).

Interacts (via BTB domain) with host CUL3.

The protein localises to the host cytoplasm. In terms of biological role, probable substrate-specific adapter of CUL3-containing E3 ubiquitin-protein ligases which mediate the ubiquitination and subsequent proteasomal degradation of host target proteins. This is Kelch repeat and BTB domain-containing protein 2 (KBTB2) from Cowpox virus (strain Brighton Red) (CPV).